The chain runs to 355 residues: Peptide chain release factor 1 (355 aa).

Position 231 is an N5-methylglutamine (Gln-231). The segment covering Leu-283 to Ser-292 has biased composition (basic and acidic residues). Residues Leu-283–Tyr-306 are disordered.

The protein belongs to the prokaryotic/mitochondrial release factor family. In terms of processing, methylated by PrmC. Methylation increases the termination efficiency of RF1.

It is found in the cytoplasm. Peptide chain release factor 1 directs the termination of translation in response to the peptide chain termination codons UAG and UAA. The polypeptide is Peptide chain release factor 1 (Campylobacter concisus (strain 13826)).